Here is a 227-residue protein sequence, read N- to C-terminus: MTAIAPVITIDGPSGAGKGTLCKAMAEALQWHLLDSGAIYRVLALAALHHHVDLASEDALVPLASHLDVRFVSTDGNLEVILEGEDVSGEIRTQEVANAASQVAAFPRVREALLRRQRAFREAPGLIADGRDMGTVVFPDAPVKIFLDASSEERAHRRMLQLQENGFSVNFERLLAEIKERDDRDRHRAVAPLVPAADALVLDSTRLSIEQVIEKALQYARQKLALA.

Residue 12-20 (GPSGAGKGT) coordinates ATP.

Belongs to the cytidylate kinase family. Type 1 subfamily.

It is found in the cytoplasm. It catalyses the reaction CMP + ATP = CDP + ADP. The enzyme catalyses dCMP + ATP = dCDP + ADP. The polypeptide is Cytidylate kinase (Salmonella typhimurium (strain LT2 / SGSC1412 / ATCC 700720)).